The primary structure comprises 747 residues: Polyribonucleotide nucleotidyltransferase (747 aa).

Mg(2+) is bound by residues Asp-487 and Asp-493. Residues 554–613 form the KH domain; it reads PSTTTIKIDKDKIRDIIGPGGKVIKEICETSGAKIDISDDGSVSVYASDRDKLKVALDKI. The region spanning 623–691 is the S1 motif domain; that stretch reads GEIFNGTVMK…NKGKAKLTIK (69 aa). The segment at 691–747 is disordered; it reads KNADKDKSSNNPKPKNNVNNAKENSEPERRDSSKKRAWNEDSNNDKEEAITERKYFN. Over residues 699 to 712 the composition is skewed to low complexity; sequence SNNPKPKNNVNNAK. Positions 727–747 are enriched in basic and acidic residues; it reads AWNEDSNNDKEEAITERKYFN.

This sequence belongs to the polyribonucleotide nucleotidyltransferase family. Requires Mg(2+) as cofactor.

Its subcellular location is the cytoplasm. It carries out the reaction RNA(n+1) + phosphate = RNA(n) + a ribonucleoside 5'-diphosphate. Functionally, involved in mRNA degradation. Catalyzes the phosphorolysis of single-stranded polyribonucleotides processively in the 3'- to 5'-direction. The sequence is that of Polyribonucleotide nucleotidyltransferase from Rickettsia felis (strain ATCC VR-1525 / URRWXCal2) (Rickettsia azadi).